The sequence spans 548 residues: ATPase expression protein 2, mitochondrial (548 aa).

The N-terminal 27 residues, 1-27, are a transit peptide targeting the mitochondrion; the sequence is MRKQVIGINNIFHLARIRSIPVHCHCK.

It belongs to the AEP2 family. As to quaternary structure, binds to the 5'UTR of the OLI1 mRNA.

Its subcellular location is the mitochondrion. Required for translation of the mitochondrial OLI1 transcript coding for the mitochondrial ATP synthase subunit 9. The protein is ATPase expression protein 2, mitochondrial (AEP2) of Candida glabrata (strain ATCC 2001 / BCRC 20586 / JCM 3761 / NBRC 0622 / NRRL Y-65 / CBS 138) (Yeast).